An 88-amino-acid chain; its full sequence is Cell division topological specificity factor (88 aa).

The protein belongs to the MinE family.

Functionally, prevents the cell division inhibition by proteins MinC and MinD at internal division sites while permitting inhibition at polar sites. This ensures cell division at the proper site by restricting the formation of a division septum at the midpoint of the long axis of the cell. This chain is Cell division topological specificity factor, found in Cronobacter sakazakii (strain ATCC BAA-894) (Enterobacter sakazakii).